The chain runs to 95 residues: UPF0473 protein CD630_12860 (95 aa).

This sequence belongs to the UPF0473 family.

This Clostridioides difficile (strain 630) (Peptoclostridium difficile) protein is UPF0473 protein CD630_12860.